A 1345-amino-acid polypeptide reads, in one-letter code: DNA-directed RNA polymerase subunit beta' (1345 aa).

Cysteine 60, cysteine 62, cysteine 75, and cysteine 78 together coordinate Zn(2+). The Mg(2+) site is built by aspartate 536, aspartate 538, and aspartate 540. Positions 895, 974, 981, and 984 each coordinate Zn(2+).

It belongs to the RNA polymerase beta' chain family. The RNAP catalytic core consists of 2 alpha, 1 beta, 1 beta' and 1 omega subunit. When a sigma factor is associated with the core the holoenzyme is formed, which can initiate transcription. The cofactor is Mg(2+). Requires Zn(2+) as cofactor.

The catalysed reaction is RNA(n) + a ribonucleoside 5'-triphosphate = RNA(n+1) + diphosphate. In terms of biological role, DNA-dependent RNA polymerase catalyzes the transcription of DNA into RNA using the four ribonucleoside triphosphates as substrates. This chain is DNA-directed RNA polymerase subunit beta', found in Bifidobacterium longum (strain DJO10A).